The primary structure comprises 105 residues: Small ribosomal subunit protein uS10 (105 aa).

It belongs to the universal ribosomal protein uS10 family. Part of the 30S ribosomal subunit.

Its function is as follows. Involved in the binding of tRNA to the ribosomes. This Francisella tularensis subsp. mediasiatica (strain FSC147) protein is Small ribosomal subunit protein uS10.